Here is a 25-residue protein sequence, read N- to C-terminus: Germin-like protein (25 aa).

It belongs to the germin family.

The chain is Germin-like protein from Populus euphratica (Euphrates poplar).